Here is a 356-residue protein sequence, read N- to C-terminus: C-X-C chemokine receptor type 2 (356 aa).

Residues 1–46 lie on the Extracellular side of the membrane; the sequence is MEYINWDNYSLEDLFGDIDNYTYNTEMPIIPADSAPCRPESLDINK. N-linked (GlcNAc...) asparagine glycans are attached at residues Asn8 and Asn20. The helical transmembrane segment at 47–73 threads the bilayer; that stretch reads YAVVVIYVLVFVLNLLGNSLVIMVVLY. The Cytoplasmic segment spans residues 74-82; it reads SRVSHSVTD. The helical transmembrane segment at 83-103 threads the bilayer; sequence VYLLNLAIADLLFALTLPIWA. At 104–118 the chain is on the extracellular side; that stretch reads VSKVKGWIFGTPLCK. Residues Cys117 and Cys194 are joined by a disulfide bond. A helical membrane pass occupies residues 119–140; the sequence is IVSLLKEVNFYSGILLLASISM. Residues 141–161 are Cytoplasmic-facing; it reads DRYLAIVHATRRLTQKKHWVK. A helical membrane pass occupies residues 162–181; that stretch reads FICLGIWALSLILSLPIFVF. The Extracellular segment spans residues 182-206; sequence RRAINPPYSSPVCYEDMGTNTTKLR. The chain crosses the membrane as a helical span at residues 207–229; sequence IVMRALPQTFGFIVPLMIMLFCY. Topologically, residues 230–249 are cytoplasmic; that stretch reads GLTLRTLFEAHMGQKHRAMR. The helical transmembrane segment at 250-269 threads the bilayer; sequence VIFAVVLVFLLCWLPYNLVA. The Extracellular portion of the chain corresponds to 270-290; the sequence is DTLMRLQAIEETCQRRNDIGR. Residues 291 to 311 form a helical membrane-spanning segment; that stretch reads ALDATEILGFFHSCLNPLIYA. Residues 312 to 356 are Cytoplasmic-facing; that stretch reads FIGQKFRHGLLKIMAFHGLISKEYLPKDSRPSFVGSSSANTSTTF.

This sequence belongs to the G-protein coupled receptor 1 family. As to quaternary structure, interacts with IL8. Interacts with GNAI2. Post-translationally, phosphorylated upon ligand binding; which is required for desensitization.

The protein resides in the cell membrane. Functionally, receptor for interleukin-8 which is a powerful neutrophil chemotactic factor. Binding of IL-8 to the receptor causes activation of neutrophils. This response is mediated via a G-protein that activates a phosphatidylinositol-calcium second messenger system. Binds to IL-8 with high affinity. Also binds with high affinity to CXCL3, GRO/MGSA and NAP-2. This is C-X-C chemokine receptor type 2 (CXCR2) from Canis lupus familiaris (Dog).